The sequence spans 355 residues: Peptide chain release factor 1 (355 aa).

An N5-methylglutamine modification is found at Gln-233.

It belongs to the prokaryotic/mitochondrial release factor family. Methylated by PrmC. Methylation increases the termination efficiency of RF1.

It localises to the cytoplasm. Peptide chain release factor 1 directs the termination of translation in response to the peptide chain termination codons UAG and UAA. In Dehalococcoides mccartyi (strain ATCC BAA-2100 / JCM 16839 / KCTC 5957 / BAV1), this protein is Peptide chain release factor 1.